The primary structure comprises 582 residues: Protein NARROW LEAF 1 (582 aa).

Disordered stretches follow at residues 1–26 and 531–582; these read MKPSDDKAQLSGLAQSEESSLDVDHQ and GMSP…DLEK. A compositionally biased stretch (basic and acidic residues) spans 562–572; it reads LGDREPKRLRS. Residues 567 to 573 carry the Nuclear localization signal motif; it reads PKRLRSD. Residues 573–582 show a composition bias toward low complexity; sequence DSGSSLDLEK.

In terms of tissue distribution, expressed in leaf sheaths, leaf blades, culms and panicles. Preferentially expressed in vascular tissues in leaves and culms.

It localises to the nucleus. The protein localises to the nucleoplasm. The protein resides in the cytoplasm. Its function is as follows. Involved in the regulation of lateral leaf growth. May be involved in the regulation of basipetal polar auxin transport (PAT) and vascular patterning in leaves. Controls photosynthesis rate by regulating carboxylation efficiency and consequently photosynthesis rate. Controls panicle and spikelet numbers, and grain yield. The chain is Protein NARROW LEAF 1 from Oryza sativa subsp. japonica (Rice).